Consider the following 103-residue polypeptide: Small ribosomal subunit protein uS10 (103 aa).

Belongs to the universal ribosomal protein uS10 family. In terms of assembly, part of the 30S ribosomal subunit.

Functionally, involved in the binding of tRNA to the ribosomes. The protein is Small ribosomal subunit protein uS10 of Chlorobium limicola (strain DSM 245 / NBRC 103803 / 6330).